A 552-amino-acid polypeptide reads, in one-letter code: Serine palmitoyltransferase 3 (552 aa).

The segment at 1–29 is disordered; sequence MANPGGGAVCNGKLHNHKKQSNGSQSRNC. A helical transmembrane segment spans residues 59–79; the sequence is PLHVMVFTYMGYGIGTLFGYL. K371 carries the N6-(pyridoxal phosphate)lysine modification.

Belongs to the class-II pyridoxal-phosphate-dependent aminotransferase family. In terms of assembly, component of the serine palmitoyltransferase (SPT) complex, which is composed of SPTLC1, SPTLC2 or SPTLC3 and SPTSSA or SPTSSB. The heterodimer consisting of SPTLC1 and SPTLC2/SPTLC3 forms the catalytic core of the enzyme, while SPTSSA or SPTSSB subunits determine substrate specificity. SPT also interacts with ORMDL proteins, especially ORMDL3, which negatively regulate SPT activity in the presence of ceramides. Requires pyridoxal 5'-phosphate as cofactor. As to expression, expressed in most tissues, except peripheral blood cells and bone marrow, with highest levels in heart, kidney, liver, uterus and skin.

The protein localises to the endoplasmic reticulum membrane. The catalysed reaction is L-serine + hexadecanoyl-CoA + H(+) = 3-oxosphinganine + CO2 + CoA. It carries out the reaction dodecanoyl-CoA + L-serine + H(+) = 3-oxotetradecasphinganine + CO2 + CoA. It catalyses the reaction tetradecanoyl-CoA + L-serine + H(+) = 3-oxohexadecasphinganine + CO2 + CoA. The enzyme catalyses octadecanoyl-CoA + L-serine + H(+) = 3-oxoeicosasphinganine + CO2 + CoA. The protein operates within lipid metabolism; sphingolipid metabolism. Its activity is regulated as follows. SPT complex catalytic activity is negatively regulated by ORMDL proteins, including ORMDL3, in the presence of ceramides. This mechanism allows to maintain ceramide levels at sufficient concentrations for the production of complex sphingolipids, but which prevents the accumulation of ceramides to levels that trigger apoptosis. Component of the serine palmitoyltransferase multisubunit enzyme (SPT) that catalyzes the initial and rate-limiting step in sphingolipid biosynthesis by condensing L-serine and activated acyl-CoA (most commonly palmitoyl-CoA) to form long-chain bases. The SPT complex is composed of SPTLC1, SPTLC2 or SPTLC3 and SPTSSA or SPTSSB. Within this complex, the heterodimer consisting of SPTLC1 and SPTLC2/SPTLC3 forms the catalytic core. The composition of the serine palmitoyltransferase (SPT) complex determines the substrate preference. The SPTLC1-SPTLC2-SPTSSA complex shows a strong preference for C16-CoA substrate, while the SPTLC1-SPTLC3-SPTSSA isozyme uses both C14-CoA and C16-CoA as substrates, with a slight preference for C14-CoA. The SPTLC1-SPTLC2-SPTSSB complex shows a strong preference for C18-CoA substrate, while the SPTLC1-SPTLC3-SPTSSB isozyme displays an ability to use a broader range of acyl-CoAs, without apparent preference. The polypeptide is Serine palmitoyltransferase 3 (Homo sapiens (Human)).